The chain runs to 304 residues: uncharacterized protein (304 aa).

Position 72–79 (72–79 (GPTGSGKT)) interacts with ATP.

This sequence belongs to the CbbQ/NirQ/NorQ/GpvN family.

This is an uncharacterized protein from Bacillus subtilis (strain 168).